A 220-amino-acid polypeptide reads, in one-letter code: Putative DNA repair glycosylase MJ1434 (220 aa).

Positions 202, 208, 211, and 217 each coordinate [4Fe-4S] cluster.

It belongs to the Nth/MutY family. [4Fe-4S] cluster serves as cofactor.

This is Putative DNA repair glycosylase MJ1434 from Methanocaldococcus jannaschii (strain ATCC 43067 / DSM 2661 / JAL-1 / JCM 10045 / NBRC 100440) (Methanococcus jannaschii).